Here is a 304-residue protein sequence, read N- to C-terminus: 4-diphosphocytidyl-2-C-methyl-D-erythritol kinase (304 aa).

K18 is a catalytic residue. Residue 103–113 participates in ATP binding; the sequence is PVAAGIGGGSA. The active site involves D145.

Belongs to the GHMP kinase family. IspE subfamily.

It carries out the reaction 4-CDP-2-C-methyl-D-erythritol + ATP = 4-CDP-2-C-methyl-D-erythritol 2-phosphate + ADP + H(+). It functions in the pathway isoprenoid biosynthesis; isopentenyl diphosphate biosynthesis via DXP pathway; isopentenyl diphosphate from 1-deoxy-D-xylulose 5-phosphate: step 3/6. Its function is as follows. Catalyzes the phosphorylation of the position 2 hydroxy group of 4-diphosphocytidyl-2C-methyl-D-erythritol. The chain is 4-diphosphocytidyl-2-C-methyl-D-erythritol kinase from Rhodospirillum rubrum (strain ATCC 11170 / ATH 1.1.1 / DSM 467 / LMG 4362 / NCIMB 8255 / S1).